The primary structure comprises 105 residues: Large ribosomal subunit protein eL36 (105 aa).

Residue Lys62 is modified to N6-acetyllysine.

Belongs to the eukaryotic ribosomal protein eL36 family. As to quaternary structure, component of the large ribosomal subunit.

Its subcellular location is the cytoplasm. It localises to the cytosol. Functionally, component of the large ribosomal subunit. The ribosome is a large ribonucleoprotein complex responsible for the synthesis of proteins in the cell. The polypeptide is Large ribosomal subunit protein eL36 (Rpl36) (Rattus norvegicus (Rat)).